Here is an 84-residue protein sequence, read N- to C-terminus: MERSRRKVLEGLVVSDKMQKTVVVSVETKSKHPIYRKLVISHKKYHAHNDNDDAKVGDLVEITETRPLSATKNWRVSKILERAR.

It belongs to the universal ribosomal protein uS17 family. Part of the 30S ribosomal subunit.

One of the primary rRNA binding proteins, it binds specifically to the 5'-end of 16S ribosomal RNA. The sequence is that of Small ribosomal subunit protein uS17 from Ureaplasma parvum serovar 3 (strain ATCC 27815 / 27 / NCTC 11736).